Consider the following 1775-residue polypeptide: Protein TIC 214 (1775 aa).

6 helical membrane passes run 19–39 (IINS…FSIG), 68–88 (FIAG…HLAL), 91–111 (PHTI…WNNH), 133–153 (VFLN…SSML), 176–196 (VGWL…LVWI), and 227–247 (IFSI…PSPI). Positions 1491-1512 (KESAGQGERESDNEKKKNLESA) are disordered.

This sequence belongs to the TIC214 family. As to quaternary structure, part of the Tic complex.

Its subcellular location is the plastid. The protein resides in the chloroplast inner membrane. Involved in protein precursor import into chloroplasts. May be part of an intermediate translocation complex acting as a protein-conducting channel at the inner envelope. In Lobularia maritima (Sweet alyssum), this protein is Protein TIC 214.